We begin with the raw amino-acid sequence, 233 residues long: Protein lin-7 homolog A (233 aa).

Residues 14 to 28 (MATLTVVQPLTLDRD) carry the Kinase interacting site motif. Residues 25–80 (LDRDVARAIELLEKLQESGEVPVHKLQSLKKVLQSEFCTAIREVYQYMHETITVNG) enclose the L27 domain. A PDZ domain is found at 108 to 190 (VVELPKTDEG…SVKLVVRYTP (83 aa)). The interval 214 to 233 (LLIQQQQQQQQQQPQQNHMS) is disordered.

It belongs to the lin-7 family. In terms of assembly, forms a complex with CASK and CASKIN1. Component of the brain-specific heterotrimeric complex (LIN-10-LIN-2-LIN-7 complex) composed of at least APBA1, CASK, and LIN7, which associates with the motor protein KIF17 to transport vesicles along microtubules. Can also interact with other modular proteins containing protein-protein interaction domains like PALS1, PALS2, MPP7, DLG1, DLG2 and DLG3 through its L27 domain. Interacts with DLG4, GRIN2B and MARCHF11 as well as CDH1 and CTNNB1, the channels KCNJ12/Kir2.2, KCNJ4/Kir2.3 and probably KCNJ2/Kir2.1 and SLC6A12/BGT-1 via its PDZ domain. The association of LIN7A with cadherin and beta-catenin is calcium-dependent, occurs at synaptic junctions and requires the actin cytoskeleton. Interacts with EGFR, ERBB2, ERBB3 and ERBB4 with both PDZ and KID domains. Associates with KIF17 via APBA1. Interacts with HTR4. Forms a tripartite complex composed of DLG1, MPP7 and LIN7 (LIN7A or LIN7C). In terms of tissue distribution, expressed in the kidney, along the length of the nephron.

It localises to the cell membrane. It is found in the basolateral cell membrane. Its subcellular location is the cell junction. The protein localises to the postsynaptic density membrane. The protein resides in the tight junction. Its function is as follows. Plays a role in establishing and maintaining the asymmetric distribution of channels and receptors at the plasma membrane of polarized cells. Forms membrane-associated multiprotein complexes that may regulate delivery and recycling of proteins to the correct membrane domains. The tripartite complex composed of LIN7 (LIN7A, LIN7B or LIN7C), CASK and APBA1 associates with the motor protein KIF17 to transport vesicles containing N-methyl-D-aspartate (NMDA) receptor subunit NR2B along microtubules. This complex may have the potential to couple synaptic vesicle exocytosis to cell adhesion in brain. Ensures the proper localization of GRIN2B (subunit 2B of the NMDA receptor) to neuronal postsynaptic density and may function in localizing synaptic vesicles at synapses where it is recruited by beta-catenin and cadherin. Required to localize Kir2 channels, GABA transporter (SLC6A12) and EGFR/ERBB1, ERBB2, ERBB3 and ERBB4 to the basolateral membrane of epithelial cells. In Mus musculus (Mouse), this protein is Protein lin-7 homolog A (Lin7a).